A 256-amino-acid chain; its full sequence is Repetitive proline-rich cell wall protein 1 (256 aa).

The N-terminal stretch at 1–26 (MRNMASLSSSLVLLLAALILSPQVLA) is a signal peptide. A run of 44 repeats spans residues 31 to 35 (PPIYK), 36 to 40 (PPVYT), 41 to 45 (PPVYK), 46 to 50 (PPVEK), 51 to 55 (PPVYK), 56 to 60 (PPVYK), 61 to 65 (PPVEK), 66 to 70 (PPVYK), 71 to 75 (PPVYK), 76 to 80 (PPIYK), 81 to 85 (PPVYK), 86 to 90 (PPVEK), 91 to 95 (PPVYK), 96 to 100 (PPVYK), 101 to 105 (PPVYK), 106 to 110 (PPVYK), 111 to 115 (PPIEK), 116 to 120 (PPVYK), 121 to 125 (PPVYK), 126 to 130 (PPVYK), 131 to 135 (PPVYK), 136 to 140 (PPVYK), 141 to 145 (PPVYK), 146 to 150 (PPVEK), 151 to 155 (PPVYK), 156 to 160 (PPVYK), 161 to 165 (PPVYK), 166 to 170 (PPVYK), 171 to 175 (PPVEK), 176 to 180 (PPVYK), 181 to 185 (PPVYK), 186 to 190 (PPVYK), 191 to 195 (PPVYK), 196 to 200 (PPVEK), 201 to 205 (PPIYK), 206 to 210 (PPVYK), 211 to 215 (PPIEK), 216 to 220 (PPVYK), 221 to 225 (PPVYK), 226 to 230 (PPVYK), 231 to 235 (PPVYK), 236 to 240 (PPVKK), 241 to 245 (PPIYK), and 246 to 250 (PPYPK). Positions 31-250 (PPIYKPPVYT…PPIYKPPYPK (220 aa)) are 44 X 5 AA tandem repeats of P-P-[VIY]-[EYKP]-[KT]. The disordered stretch occupies residues 233-256 (VYKPPVKKPPIYKPPYPKYPPGSN).

This sequence belongs to the plant proline-rich protein superfamily. ENOD12 family.

Its subcellular location is the secreted. The protein localises to the cell wall. In terms of biological role, this is a developmentally regulated putative cell wall protein. This is Repetitive proline-rich cell wall protein 1 (PRP1) from Glycine max (Soybean).